Here is a 421-residue protein sequence, read N- to C-terminus: Lipid II:glycine glycyltransferase (421 aa).

Belongs to the FemABX family. In terms of assembly, monomer.

It localises to the cytoplasm. It catalyses the reaction beta-D-GlcNAc-(1-&gt;4)-Mur2Ac(oyl-L-Ala-D-isoglutaminyl-L-Lys-D-Ala-D-Ala)-di-trans,octa-cis-undecaprenyl diphosphate + glycyl-tRNA(Gly) = beta-D-GlcNAc-(1-&gt;4)-Mur2Ac(oyl-L-Ala-D-isoglutaminyl-L-Lys-(N(6)-Gly)-D-Ala-D-Ala)-di-trans,octa-cis-undecaprenyl diphosphate + tRNA(Gly) + H(+). Its function is as follows. Catalyzes the incorporation of the first glycine of the pentaglycine interpeptide bridge, which is characteristic of the S.aureus peptidoglycan. This glycine is added to the epsilon-amino group of the L-lysine of the membrane-bound lipid II intermediate (GlcNAc-(beta-1,4)-N-acetylmuramic acid(-L-Ala-D-iGln-L-Lys-D-Ala-D-Ala)-pyrophosphoryl-undecaprenol), using glycyl-tRNA(Gly) as donor, in a ribosome-independent mechanism. This is Lipid II:glycine glycyltransferase (femX) from Staphylococcus aureus (strain MSSA476).